Consider the following 343-residue polypeptide: MTISVAVSGASGYAGGEVLRLLAGHPNVTIGAITAHSNAGSRLGELQPHLHGLASRILEDTTVENLSGHDVVFLALPHGASAEIAAQLPEGTVVIDAGADHRLQDAAAWERFYGSAHAGTWPYGLPELPGQREALKGATRIAVPGCYPTSALLALTPGFANNLLLTDDVVIVSASGTSGAGKAAKVNLIGAEVMGSMSPYGVGGGHRHTPEIEQGLSNAAGEPVTVSFTPTLVPMSRGILTTATAKVGHGVSYAELRQAWADAYDDEPFVHLLPEGQWPTTKSVQGSNHAVMQLAFDAHTGRVIVTCAIDNLTKGTAGGAVQSMNIALGLDETAGLNLQGVAP.

The active site involves Cys146.

It belongs to the NAGSA dehydrogenase family. Type 1 subfamily.

The protein localises to the cytoplasm. It catalyses the reaction N-acetyl-L-glutamate 5-semialdehyde + phosphate + NADP(+) = N-acetyl-L-glutamyl 5-phosphate + NADPH + H(+). The protein operates within amino-acid biosynthesis; L-arginine biosynthesis; N(2)-acetyl-L-ornithine from L-glutamate: step 3/4. In terms of biological role, catalyzes the NADPH-dependent reduction of N-acetyl-5-glutamyl phosphate to yield N-acetyl-L-glutamate 5-semialdehyde. This chain is N-acetyl-gamma-glutamyl-phosphate reductase, found in Paenarthrobacter aurescens (strain TC1).